The sequence spans 481 residues: Ribulose bisphosphate carboxylase large chain (481 aa).

The propeptide occupies 1–2; that stretch reads MS. An N-acetylproline modification is found at Pro3. Position 14 is an N6,N6,N6-trimethyllysine (Lys14). Substrate is bound by residues Asn123 and Thr173. The Proton acceptor role is filled by Lys175. Lys177 serves as a coordination point for substrate. Mg(2+) is bound by residues Lys201, Asp203, and Glu204. N6-carboxylysine is present on Lys201. His294 acts as the Proton acceptor in catalysis. 3 residues coordinate substrate: Arg295, His327, and Ser379.

It belongs to the RuBisCO large chain family. Type I subfamily. Heterohexadecamer of 8 large chains and 8 small chains; disulfide-linked. The disulfide link is formed within the large subunit homodimers. The cofactor is Mg(2+). The disulfide bond which can form in the large chain dimeric partners within the hexadecamer appears to be associated with oxidative stress and protein turnover.

The protein localises to the plastid. The catalysed reaction is 2 (2R)-3-phosphoglycerate + 2 H(+) = D-ribulose 1,5-bisphosphate + CO2 + H2O. The enzyme catalyses D-ribulose 1,5-bisphosphate + O2 = 2-phosphoglycolate + (2R)-3-phosphoglycerate + 2 H(+). RuBisCO catalyzes two reactions: the carboxylation of D-ribulose 1,5-bisphosphate, the primary event in carbon dioxide fixation, as well as the oxidative fragmentation of the pentose substrate in the photorespiration process. Both reactions occur simultaneously and in competition at the same active site. The chain is Ribulose bisphosphate carboxylase large chain from Cuscuta obtusiflora (Peruvian dodder).